Here is a 266-residue protein sequence, read N- to C-terminus: Hydroxyethylthiazole kinase (266 aa).

Met-43 serves as a coordination point for substrate. ATP-binding residues include Arg-119 and Thr-166. Residue Gly-193 participates in substrate binding.

It belongs to the Thz kinase family. Mg(2+) serves as cofactor.

The enzyme catalyses 5-(2-hydroxyethyl)-4-methylthiazole + ATP = 4-methyl-5-(2-phosphooxyethyl)-thiazole + ADP + H(+). Its pathway is cofactor biosynthesis; thiamine diphosphate biosynthesis; 4-methyl-5-(2-phosphoethyl)-thiazole from 5-(2-hydroxyethyl)-4-methylthiazole: step 1/1. In terms of biological role, catalyzes the phosphorylation of the hydroxyl group of 4-methyl-5-beta-hydroxyethylthiazole (THZ). This Methanococcus maripaludis (strain C6 / ATCC BAA-1332) protein is Hydroxyethylthiazole kinase.